A 130-amino-acid polypeptide reads, in one-letter code: Small ribosomal subunit protein uS9 (130 aa).

The protein belongs to the universal ribosomal protein uS9 family.

This Idiomarina loihiensis (strain ATCC BAA-735 / DSM 15497 / L2-TR) protein is Small ribosomal subunit protein uS9.